The primary structure comprises 300 residues: D-alanine--D-alanine ligase (300 aa).

One can recognise an ATP-grasp domain in the interval 99–293; it reads KKILKYANIN…FAELLNSIVK (195 aa). 126–181 contributes to the ATP binding site; the sequence is IEKIGYPVFVKPNSGGSSVATNLVKDGDGIKEAVELALKYDKEVMIENYTKGEEIT. Mg(2+)-binding residues include Asp248, Glu260, and Asn262.

This sequence belongs to the D-alanine--D-alanine ligase family. Mg(2+) is required as a cofactor. The cofactor is Mn(2+).

It is found in the cytoplasm. The catalysed reaction is 2 D-alanine + ATP = D-alanyl-D-alanine + ADP + phosphate + H(+). The protein operates within cell wall biogenesis; peptidoglycan biosynthesis. Its function is as follows. Cell wall formation. The protein is D-alanine--D-alanine ligase of Clostridium botulinum (strain 657 / Type Ba4).